The chain runs to 89 residues: Large ribosomal subunit protein bL27 (89 aa).

A disordered region spans residues 1-26 (MAHKKAGGSSKNGRDSNAQRRGVKRF).

It belongs to the bacterial ribosomal protein bL27 family.

In Maridesulfovibrio salexigens (strain ATCC 14822 / DSM 2638 / NCIMB 8403 / VKM B-1763) (Desulfovibrio salexigens), this protein is Large ribosomal subunit protein bL27.